We begin with the raw amino-acid sequence, 732 residues long: uncharacterized protein (732 aa).

The TR mART core domain maps to 163 to 390 (YYTINELNYL…FGIVAKKKYE (228 aa)). Catalysis depends on residues arginine 285, serine 309, and glutamate 354.

This is an uncharacterized protein from Acanthamoeba polyphaga mimivirus (APMV).